Here is a 266-residue protein sequence, read N- to C-terminus: UPF0294 protein YafD (266 aa).

The protein belongs to the UPF0294 family.

It is found in the cytoplasm. In Salmonella paratyphi C (strain RKS4594), this protein is UPF0294 protein YafD.